The chain runs to 363 residues: Putative C-&gt;U-editing enzyme APOBEC-4 (363 aa).

The CMP/dCMP-type deaminase domain maps to 61–177; the sequence is PQTKHLTFYE…AWNREALRSL (117 aa). A Zn(2+)-binding site is contributed by His93. The active-site Proton donor is the Glu95. Residues Cys127 and Cys134 each contribute to the Zn(2+) site.

This sequence belongs to the cytidine and deoxycytidylate deaminase family. Requires Zn(2+) as cofactor.

In terms of biological role, putative C to U editing enzyme whose physiological substrate is not yet known. The sequence is that of Putative C-&gt;U-editing enzyme APOBEC-4 (APOBEC4) from Macaca fascicularis (Crab-eating macaque).